The sequence spans 197 residues: Large ribosomal subunit protein eL15 (197 aa).

The segment covering 163-172 (GKTSAGRKGR) has biased composition (basic residues). A disordered region spans residues 163–197 (GKTSAGRKGRGMQTRGTGTEKTRPSVRSNLNRSKK). The span at 186–197 (PSVRSNLNRSKK) shows a compositional bias: polar residues.

The protein belongs to the eukaryotic ribosomal protein eL15 family.

This Methanococcoides burtonii (strain DSM 6242 / NBRC 107633 / OCM 468 / ACE-M) protein is Large ribosomal subunit protein eL15.